The following is a 385-amino-acid chain: Mannitol-1-phosphate 5-dehydrogenase (385 aa).

A4 to G15 contacts NAD(+).

The protein belongs to the mannitol dehydrogenase family.

It carries out the reaction D-mannitol 1-phosphate + NAD(+) = beta-D-fructose 6-phosphate + NADH + H(+). In Lactococcus lactis subsp. lactis (strain IL1403) (Streptococcus lactis), this protein is Mannitol-1-phosphate 5-dehydrogenase.